Reading from the N-terminus, the 417-residue chain is Odorant receptor 65a (417 aa).

At 1–62 (MTELRSERKN…MNSEQRRLPR (62 aa)) the chain is on the cytoplasmic side. A helical membrane pass occupies residues 63–83 (IVAWQYFVSIQLATALASLFY). At 84–98 (GISESIGDIVNLGRD) the chain is on the extracellular side. The chain crosses the membrane as a helical span at residues 99–119 (LVFIITIIFICFRLVFFAQYA). Residues 120 to 152 (GELDVIIDALEDIYHWSIKGPATKEVQETKRLH) lie on the Cytoplasmic side of the membrane. Residues 153–173 (FLLFMALIITWFSFLILFMLI) form a helical membrane-spanning segment. At 174-206 (KISTPFWIESQTLPFHVSWPFQLHDPSKHPIAY) the chain is on the extracellular side. The chain crosses the membrane as a helical span at residues 207-227 (IIIFVSQSTTMLYFLIWLGVV). Over 228–290 (ENMGVSLFFE…TDRCNHIFNG (63 aa)) the chain is Cytoplasmic. A helical transmembrane segment spans residues 291 to 311 (AFIMQMLINFLLVSLSLFEVL). Topologically, residues 312–316 (AAKKN) are extracellular. A helical transmembrane segment spans residues 317–337 (PQVAVEYMIIMLMTLGHLSFW). Over 338–393 (SKFGDMFSKESEQVALAVYEAYDPNVGSKSIHRQFCFFIQRAQKPLIMKASPFPPF) the chain is Cytoplasmic. The chain crosses the membrane as a helical span at residues 394–414 (NLENYMFILKQCYSILTILAN). Over 415-417 (TLE) the chain is Extracellular.

It belongs to the insect chemoreceptor superfamily. Heteromeric odorant receptor channel (TC 1.A.69) family. Or49a subfamily. In terms of assembly, interacts with Orco. Complexes exist early in the endomembrane system in olfactory sensory neurons (OSNs), coupling these complexes to the conserved ciliary trafficking pathway. In terms of tissue distribution, expressed in olfactory sensory neurons in the antenna.

It localises to the cell membrane. Its function is as follows. Odorant receptor which mediates acceptance or avoidance behavior, depending on its substrates. The odorant receptor repertoire encodes a large collection of odor stimuli that vary widely in identity, intensity, and duration. May form a complex with Orco to form odorant-sensing units, providing sensitive and prolonged odorant signaling and calcium permeability. Involved in olfactory communication for modulating aggression through the sensing of the male-specific pheromone 11-cis-vaccenyl acetate (cVA). Although acute exposure to cVA elicites aggression through Or67d olfactory receptor neurons (ORNs), chronic cVA exposure reduces aggression through Or65a ORNs. Moreover, cVA leads to generalized learning with mated females. It is a major component of the male cuticular hydrocarbon profile, but it is not found on virgin females. During copulation, cVA is transferred to the female in ejaculate along with sperm and peptides that decrease her sexual receptivity. This Drosophila melanogaster (Fruit fly) protein is Odorant receptor 65a (Or65a).